Reading from the N-terminus, the 374-residue chain is Putative clathrin assembly protein At1g33340 (374 aa).

The 134-residue stretch at 30–163 (YNEKAFFDIE…GWIINQAGKL (134 aa)) folds into the ENTH domain.

Its subcellular location is the membrane. It is found in the clathrin-coated pit. The protein localises to the golgi apparatus. It localises to the cytoplasmic vesicle. The protein resides in the clathrin-coated vesicle. The protein is Putative clathrin assembly protein At1g33340 of Arabidopsis thaliana (Mouse-ear cress).